Reading from the N-terminus, the 374-residue chain is Mitochondrial inner membrane protein oxa1-1 (374 aa).

A helical transmembrane segment spans residues 77–97 (TINVYAGAPWWVSIILTTLGV). Residues 98–159 (RLALTPVMIA…GIYLKHNVNP (62 aa)) lie on the Mitochondrial intermembrane side of the membrane. A helical transmembrane segment spans residues 160-180 (FAIFILPLTQSAVFFSFFYAI). Over 181 to 242 (RKMSRLSVDG…TIGNSTNWRT (62 aa)) the chain is Mitochondrial matrix. The helical transmembrane segment at 243–263 (FFFLCCLLSPLLTAKLPAAIF) threads the bilayer. At 264 to 374 (MYWIPSSLFN…SKKNSKKQSN (111 aa)) the chain is on the mitochondrial intermembrane side.

It belongs to the OXA1/ALB3/YidC family.

The protein localises to the mitochondrion inner membrane. In terms of biological role, required for the insertion of integral membrane proteins into the mitochondrial inner membrane. Essential for the activity and assembly of cytochrome c oxidase. Not essential for viability, while oxa102 is essential. When both genes are deleted the cell is non-viable, suggesting that oxa101 act as a back-up for oxa102. The protein is Mitochondrial inner membrane protein oxa1-1 (oxa101) of Schizosaccharomyces pombe (strain 972 / ATCC 24843) (Fission yeast).